Reading from the N-terminus, the 915-residue chain is Probable dipeptidyl-aminopeptidase B (915 aa).

Residues 1–82 (MAPPFTDDPE…GAFLGPPGVP (82 aa)) are disordered. Residues 1-94 (MAPPFTDDPE…RQPMDRGFRR (94 aa)) lie on the Cytoplasmic side of the membrane. Residues 15–32 (STSRLSQDSLSSVSTTSL) show a composition bias toward low complexity. Over residues 36 to 62 (RIQEEMDRDPSASRSARRDLLPATKDE) the composition is skewed to basic and acidic residues. Residues 95–115 (ILIIIGAVFVGAWLAGLGIFV) traverse the membrane as a helical; Signal-anchor for type II membrane protein segment. Residues 116 to 915 (LSGSYKHESD…IDTKKRRHVS (800 aa)) lie on the Vacuolar side of the membrane. Asn-355 and Asn-577 each carry an N-linked (GlcNAc...) asparagine glycan. Catalysis depends on Ser-760, which acts as the Charge relay system. An N-linked (GlcNAc...) asparagine glycan is attached at Asn-819. Residues Asp-837 and His-870 each act as charge relay system in the active site.

Belongs to the peptidase S9B family.

Its subcellular location is the vacuole membrane. The enzyme catalyses Release of an N-terminal dipeptide, Xaa-Yaa-|-Zaa-, from a polypeptide, preferentially when Yaa is Pro, provided Zaa is neither Pro nor hydroxyproline.. In terms of biological role, type IV dipeptidyl-peptidase which removes N-terminal dipeptides sequentially from polypeptides having unsubstituted N-termini provided that the penultimate residue is proline. This chain is Probable dipeptidyl-aminopeptidase B (DAPB), found in Metarhizium robertsii (strain ARSEF 23 / ATCC MYA-3075) (Metarhizium anisopliae (strain ARSEF 23)).